We begin with the raw amino-acid sequence, 175 residues long: Transcriptional repressor NrdR (175 aa).

The segment at 3 to 32 (CPYCSHPDSKVIDSRDVDDGVRRRRECVVC) is a zinc-finger region. An ATP-cone domain is found at 47-137 (LFVVKKDQRR…VYREFTDITQ (91 aa)).

It belongs to the NrdR family. The cofactor is Zn(2+).

Negatively regulates transcription of bacterial ribonucleotide reductase nrd genes and operons by binding to NrdR-boxes. This is Transcriptional repressor NrdR from Dehalococcoides mccartyi (strain CBDB1).